The following is a 284-amino-acid chain: Bifunctional protein FolD 2 (284 aa).

Residues 165–167 (GRG), Thr192, and Val233 contribute to the NADP(+) site.

It belongs to the tetrahydrofolate dehydrogenase/cyclohydrolase family. In terms of assembly, homodimer.

It catalyses the reaction (6R)-5,10-methylene-5,6,7,8-tetrahydrofolate + NADP(+) = (6R)-5,10-methenyltetrahydrofolate + NADPH. The catalysed reaction is (6R)-5,10-methenyltetrahydrofolate + H2O = (6R)-10-formyltetrahydrofolate + H(+). The protein operates within one-carbon metabolism; tetrahydrofolate interconversion. Catalyzes the oxidation of 5,10-methylenetetrahydrofolate to 5,10-methenyltetrahydrofolate and then the hydrolysis of 5,10-methenyltetrahydrofolate to 10-formyltetrahydrofolate. The polypeptide is Bifunctional protein FolD 2 (Streptomyces avermitilis (strain ATCC 31267 / DSM 46492 / JCM 5070 / NBRC 14893 / NCIMB 12804 / NRRL 8165 / MA-4680)).